The following is a 111-amino-acid chain: Cytochrome c-550 (111 aa).

Residues C13, C16, H17, and M90 each coordinate heme c.

In terms of processing, binds 1 heme c group covalently per subunit.

The chain is Cytochrome c-550 from Novispirillum itersonii (Aquaspirillum itersonii).